Reading from the N-terminus, the 211-residue chain is Uridine kinase (211 aa).

12–19 (GGSGSGKT) is a binding site for ATP.

It belongs to the uridine kinase family.

The protein resides in the cytoplasm. It catalyses the reaction uridine + ATP = UMP + ADP + H(+). It carries out the reaction cytidine + ATP = CMP + ADP + H(+). It participates in pyrimidine metabolism; CTP biosynthesis via salvage pathway; CTP from cytidine: step 1/3. Its pathway is pyrimidine metabolism; UMP biosynthesis via salvage pathway; UMP from uridine: step 1/1. The sequence is that of Uridine kinase (udk) from Bacillus subtilis (strain 168).